A 261-amino-acid chain; its full sequence is Thiamine thiazole synthase (261 aa).

NAD(+) contacts are provided by residues S40, 59 to 60 (ER), G67, V133, and 159 to 161 (HID). Residues D161 and H176 each contribute to the Fe cation site. 2 residues coordinate NAD(+): S179 and M226. R236 contributes to the glycine binding site.

Belongs to the THI4 family. As to quaternary structure, homooctamer; tetramer of dimers. Requires Fe(2+) as cofactor.

The enzyme catalyses hydrogen sulfide + glycine + NAD(+) = ADP-5-ethyl-4-methylthiazole-2-carboxylate + nicotinamide + 3 H2O + H(+). It functions in the pathway cofactor biosynthesis; thiamine diphosphate biosynthesis. Functionally, involved in the biosynthesis of the thiazole moiety of thiamine. Catalyzes the conversion of NAD and glycine to adenosine diphosphate 5-(2-hydroxyethyl)-4-methylthiazole-2-carboxylate (ADT), an adenylated thiazole intermediate, using free sulfide as a source of sulfur. This is Thiamine thiazole synthase from Methanococcus maripaludis (strain C6 / ATCC BAA-1332).